Here is a 408-residue protein sequence, read N- to C-terminus: Peptidase T (408 aa).

Histidine 78 contacts Zn(2+). Aspartate 80 is an active-site residue. Aspartate 140 is a binding site for Zn(2+). Glutamate 173 serves as the catalytic Proton acceptor. Glutamate 174, aspartate 196, and histidine 379 together coordinate Zn(2+).

It belongs to the peptidase M20B family. Requires Zn(2+) as cofactor.

It is found in the cytoplasm. It carries out the reaction Release of the N-terminal residue from a tripeptide.. Cleaves the N-terminal amino acid of tripeptides. This Shigella boydii serotype 18 (strain CDC 3083-94 / BS512) protein is Peptidase T.